Here is a 426-residue protein sequence, read N- to C-terminus: Serine protease HTRA2, mitochondrial (426 aa).

The transit peptide at 1–30 directs the protein to the mitochondrion; that stretch reads MALRGSHRLDDFIRRCSALTLFHSQAPSRR. The disordered stretch occupies residues 30–59; that stretch reads RVSHCGRDRRQQQDPPGQGRQEQQESGGGH. Positions 31–78 are excised as a propeptide; it reads VSHCGRDRRQQQDPPGQGRQEQQESGGGHWSRFGWRSLIRFFVPFSLG. The span at 42-54 shows a compositional bias: low complexity; the sequence is QDPPGQGRQEQQE. The chain crosses the membrane as a helical span at residues 68-86; that stretch reads LIRFFVPFSLGAVASSLVI. The IAP-binding signature appears at 79 to 82; the sequence is AVAS. Residues 143–306 are serine protease; the sequence is SNGSGFIIEQ…IPIDYVKVFL (164 aa). Active-site charge relay system residues include H161, D193, and S270. In terms of domain architecture, PDZ spans 329-414; it reads MGITMLTLTP…HLDIVILRGV (86 aa).

The protein belongs to the peptidase S1C family. Interacts with th/DIAP1 (via BIR 2 domain).

The protein resides in the mitochondrion intermembrane space. It is found in the mitochondrion membrane. The enzyme catalyses Cleavage of non-polar aliphatic amino-acids at the P1 position, with a preference for Val, Ile and Met. At the P2 and P3 positions, Arg is selected most strongly with a secondary preference for other hydrophilic residues.. Serine protease that shows proteolytic activity against a non-specific substrate beta-casein. Promotes or induces cell death either by direct binding to and inhibition of BIRC proteins (also called inhibitor of apoptosis proteins, IAPs), leading to an increase in caspase activity, or by a BIRC inhibition-independent, caspase-independent and serine protease activity-dependent mechanism. Can antagonize antiapoptotic activity of th/Diap1 by directly inducing the degradation of th/Diap1. The protein is Serine protease HTRA2, mitochondrial of Drosophila ananassae (Fruit fly).